Reading from the N-terminus, the 422-residue chain is Probable sucrose-phosphatase 2 (422 aa).

Belongs to the sucrose phosphatase family. As to quaternary structure, homodimer. Mg(2+) serves as cofactor.

It carries out the reaction sucrose 6(F)-phosphate + H2O = sucrose + phosphate. Its pathway is glycan biosynthesis; sucrose biosynthesis; sucrose from D-fructose 6-phosphate and UDP-alpha-D-glucose: step 2/2. Its function is as follows. Catalyzes the final step of sucrose synthesis. The chain is Probable sucrose-phosphatase 2 (SPP2) from Arabidopsis thaliana (Mouse-ear cress).